The sequence spans 547 residues: Fumarate reductase (CoM/CoB) subunit A (547 aa).

This sequence belongs to the FAD-dependent oxidoreductase 2 family. Subunit A of the heterodimeric fumarate reductase of methanogenic Archaea, composed of subunits A (TfrA) and B (TfrB). An oxidized flavin serves as cofactor.

The protein resides in the cytoplasm. It catalyses the reaction coenzyme B + coenzyme M + fumarate = coenzyme M-coenzyme B heterodisulfide + succinate. Catalyzes the reduction of fumarate with reduced coenzyme M (CoM-S-H) and coenzyme B (CoB-S-H). In vitro, is able to reduces fumarate with reduced benzyl viologen, oxidize CoM-S-H and CoB-S-H to CoM-S-S-CoB with methylene blue, and reduce CoM-S-S-CoB with reduced benzyl viologen. The enzyme has specificity for the two thiol compounds as the CoB--CoM heterodisulfide reductase. The enzyme is very sensitive to oxygen. This chain is Fumarate reductase (CoM/CoB) subunit A, found in Methanothermobacter marburgensis (strain ATCC BAA-927 / DSM 2133 / JCM 14651 / NBRC 100331 / OCM 82 / Marburg) (Methanobacterium thermoautotrophicum).